Reading from the N-terminus, the 744-residue chain is NAD(P)H-quinone oxidoreductase subunit 5, chloroplastic (744 aa).

16 helical membrane passes run 9–29, 40–60, 89–109, 125–145, 147–167, 185–205, 219–239, 258–278, 290–312, 327–347, 354–374, 396–416, 425–445, 549–569, 608–628, and 724–744; these read WIIPFLPLPVPMLIGLGLFLF, WAFQSVLLLSIVMIFSMNLSI, IDPLTSIMSILITTVGILVLI, FVYMSFFSTSMLGLVTSSNLI, IYIFWELVGICSYLLIGFWFT, GDFGLLLGILGFYWITGSFEF, NEVNFLFVTLCAVLLFAGAIA, TPISALIHAATMVAAGIFLVA, IMNFISLIGIITVFLGATLALAQ, LGYMMLALGMGSYRSALFHLI, ALLFLGSGSVIHSMETLVGYC, TSFLLGTLSLCGIPPLACFWS, WLYSPIFAIIAWSTAGLTAFY, LFPILILVLFTLFVGFLGIPF, VFSVSISSFGIFIAFFLYKPV, and YLFFYFSYVSIFLLIYYFLNF.

The protein belongs to the complex I subunit 5 family. NDH is composed of at least 16 different subunits, 5 of which are encoded in the nucleus.

The protein localises to the plastid. The protein resides in the chloroplast thylakoid membrane. The enzyme catalyses a plastoquinone + NADH + (n+1) H(+)(in) = a plastoquinol + NAD(+) + n H(+)(out). It catalyses the reaction a plastoquinone + NADPH + (n+1) H(+)(in) = a plastoquinol + NADP(+) + n H(+)(out). NDH shuttles electrons from NAD(P)H:plastoquinone, via FMN and iron-sulfur (Fe-S) centers, to quinones in the photosynthetic chain and possibly in a chloroplast respiratory chain. The immediate electron acceptor for the enzyme in this species is believed to be plastoquinone. Couples the redox reaction to proton translocation, and thus conserves the redox energy in a proton gradient. The polypeptide is NAD(P)H-quinone oxidoreductase subunit 5, chloroplastic (ndhF) (Mutisia acuminata).